The sequence spans 522 residues: Putative E3 ubiquitin-protein ligase RING1a (522 aa).

Over residues 1–10 (MSVKNNSFSS) the composition is skewed to polar residues. The tract at residues 1 to 119 (MSVKNNSFSS…RSPSSISGDQ (119 aa)) is disordered. Residues 32–64 (LQEKDETKEEKEGDEEVKHDEAEEDQEVVKPND) show a composition bias toward basic and acidic residues. Over residues 65–106 (AEEDDDGDDAEEDEEEEVEAEEDEEAEEEEEEEEEEEEEEED) the composition is skewed to acidic residues. The segment at 136 to 176 (CPICLGIIKKTRTVMECLHRFCRECIDKSMRLGNNECPACR) adopts an RING-type zinc-finger fold. Disordered stretches follow at residues 250 to 347 (VLMR…DTKG) and 363 to 385 (RGGT…KSVR). Over residues 287–306 (NNNRGRDKDSSSDERGTEVR) the composition is skewed to basic and acidic residues. A compositionally biased stretch (low complexity) spans 316-325 (SRSTQHPSSS). Polar residues-rich tracts occupy residues 326–336 (GANKNNGNCAD) and 366–384 (TRSN…SKSV).

Homodimer or heterodimer with RING1B. Interacts with CLF. Component of the PRC1-like complex, at least composed of RING1A, RING1B and LHP1.

It localises to the nucleus. It carries out the reaction S-ubiquitinyl-[E2 ubiquitin-conjugating enzyme]-L-cysteine + [acceptor protein]-L-lysine = [E2 ubiquitin-conjugating enzyme]-L-cysteine + N(6)-ubiquitinyl-[acceptor protein]-L-lysine.. It functions in the pathway protein modification; protein ubiquitination. Functionally, putative E3 ubiquitin-protein ligase that mediates monoubiquitination of 'Lys-119' of histone H2A (H2AK119ub), thereby playing a central role in histone code and gene regulation. As part of the PRC1-like complex, repress class I KNOX gene expression. PcG PRC1 complex maintains the transcriptionally repressive state of many genes, including Hox genes, throughout development. PcG PRC1 complex acts via chromatin remodeling and modification of histones, rendering chromatin heritably changed in its expressibility. This is Putative E3 ubiquitin-protein ligase RING1a (RING1A) from Arabidopsis thaliana (Mouse-ear cress).